The primary structure comprises 772 residues: MQHTGNCETLIVNSCFGSTCARSIPVFIDSCDLTAEVSRDEETRLARSMPVVLEKIESIIEKIFQTSGPNIVHDKDRAKIALCRLLLGPVAVPCFCEEWDTNDYLSKSGCKCIGPILYIHTSRCRCSDIPVFKFSIMKDYYASHVFRGLLSLKEWNTHLPNVLCTCELSMSDRYVATVYPKQNSIYLEYYPYFLCYLCRHLTVIEIEQCTNDLISLLGPKVAQRVIIHFKLLFGFRHKPHIGTVDSWFWENFFMLELHKLWLTVVKHNRVTTDFFNVVYEKIQNYKQYAIKTLRMSSKAVPAIQRLCLAKFKQQLLYLNIKVTVKKNKREMCLNGFVYGKTLYVVESSQLIFRNLLLLYYDYSLPDECKTNEENVLTAHYIRVISRLSFKRSRSALPPGVRPDFIFVAQQPKRKELPNVPGGIDFAEITSVRHGAVTLNAFNTNKVMNLKATISKRANFVYHRIPKTMTHSFVMYKHTFKEPAFTVSTFVSNDDLDMSSLNINIRGPYCDFLYALGVYKMHVSIRDLFLPAFVCNSNNSVDLQGLENQDVVRNRKKKVYWITNFPCMISNANKVNVGWFKAGTGIIPRVSGEDLQNVLLQELNNVREIPGLVFDMDLHQLLVLLEQRNLHQIPFLVKQFLIFLRLGLLMGYGHSRRNKVHDIMLHLISNGLFDFNKNSVANTKIKHGCALVGTRLANNVPKIIARQKKMKLDHMGRNANSLAVLRFIVKSGEQKNKTVFIKLLEYLAETSTAINTRNEVARLLQTLTAKVKT.

This sequence belongs to the herpesviridae UL87 family.

The protein is Protein U58 (U58) of Homo sapiens (Human).